The following is a 445-amino-acid chain: Chromosomal replication initiator protein DnaA (445 aa).

The domain I, interacts with DnaA modulators stretch occupies residues 1–73 (MSTHLTETWE…VNALKLLTSK (73 aa)). The domain II stretch occupies residues 73–106 (KKYNIDFIVTTEEKIEKNHNNEKSNIVVNDEMST). The domain III, AAA+ region stretch occupies residues 107-323 (MLNPKYTFDS…GALIRIVAFS (217 aa)). Residues Gly-151, Gly-153, Lys-154, and Thr-155 each contribute to the ATP site. Residues 324-445 (SLTNKEISVD…KELNKRINQK (122 aa)) are domain IV, binds dsDNA.

It belongs to the DnaA family. In terms of assembly, oligomerizes as a right-handed, spiral filament on DNA at oriC.

The protein resides in the cytoplasm. Functionally, plays an essential role in the initiation and regulation of chromosomal replication. ATP-DnaA binds to the origin of replication (oriC) to initiate formation of the DNA replication initiation complex once per cell cycle. Binds the DnaA box (a 9 base pair repeat at the origin) and separates the double-stranded (ds)DNA. Forms a right-handed helical filament on oriC DNA; dsDNA binds to the exterior of the filament while single-stranded (ss)DNA is stabiized in the filament's interior. The ATP-DnaA-oriC complex binds and stabilizes one strand of the AT-rich DNA unwinding element (DUE), permitting loading of DNA polymerase. After initiation quickly degrades to an ADP-DnaA complex that is not apt for DNA replication. Binds acidic phospholipids. This chain is Chromosomal replication initiator protein DnaA, found in Clostridium botulinum (strain Okra / Type B1).